Consider the following 320-residue polypeptide: Probable cell division protein WhiA (320 aa).

The segment at residues 276–310 (TLKELGELVSGGKISKSGINHRLRKIDEIAERLRA) is a DNA-binding region (H-T-H motif).

It belongs to the WhiA family.

In terms of biological role, involved in cell division and chromosome segregation. This is Probable cell division protein WhiA from Geobacillus sp. (strain WCH70).